Consider the following 711-residue polypeptide: Probable cadmium-transporting ATPase (711 aa).

In terms of domain architecture, HMA spans 3 to 66 (EKTVYRVDGL…AGAFEHLKII (64 aa)). Cd(2+)-binding residues include C14 and C17. The next 5 membrane-spanning stretches (helical) occupy residues 89–109 (WRLLLSGLFIAVGYASQIMNG), 111–131 (DFYLTNALFIFAIFIGGYSLF), 151–171 (IAIIGAAFIGEWAEGSIVVIL), 317–337 (TPAIIVIAALIATVPPLLFGG), and 347–367 (LSVLVVGCPCALVVSTPVAIV). The active-site 4-aspartylphosphate intermediate is the D398. A helical transmembrane segment spans residues 669–689 (VIKLIALLLVIPGWLTLWIAI).

Belongs to the cation transport ATPase (P-type) (TC 3.A.3) family. Type IB subfamily.

It is found in the cell membrane. The catalysed reaction is Cd(2+)(in) + ATP + H2O = Cd(2+)(out) + ADP + phosphate + H(+). In terms of biological role, couples the hydrolysis of ATP with the export of cadmium. The polypeptide is Probable cadmium-transporting ATPase (cadA) (Listeria monocytogenes).